The sequence spans 134 residues: Interferon-induced transmembrane protein 5 (134 aa).

A compositionally biased stretch (basic and acidic residues) spans 1–20 (MDTSYPREDPRAPSSRKADA). The disordered stretch occupies residues 1–31 (MDTSYPREDPRAPSSRKADAAAHTALSMGTP). Over 1–39 (MDTSYPREDPRAPSSRKADAAAHTALSMGTPGPTPRDHM) the chain is Extracellular. The helical transmembrane segment at 40-60 (LWSVFSTMYLNLCCLGFLALV) threads the bilayer. Residues Cys52, Cys53, and Cys86 are each lipidated (S-palmitoyl cysteine). The Cytoplasmic segment spans residues 61 to 88 (HSVKARDQKMAGNLEAARQYGSKAKCYN). A helical membrane pass occupies residues 89–109 (ILAAMWTLVPPLLLLGLVVTG). The Extracellular portion of the chain corresponds to 110 to 134 (ALHLSKLAKDSAAFFSTKFDEEDYN).

The protein belongs to the CD225/Dispanin family. In terms of assembly, interacts with FKBP11. Post-translationally, palmitoylated. In terms of tissue distribution, detected in embryonic bone (at protein level). Highly expressed in osteoblasts of adults and embryos. Expressed in primitive hemopoietic cells.

The protein localises to the cell membrane. Functionally, required for normal bone mineralization. The protein is Interferon-induced transmembrane protein 5 (Ifitm5) of Mus musculus (Mouse).